We begin with the raw amino-acid sequence, 400 residues long: Endophilin-B2 (400 aa).

The residue at position 1 (methionine 1) is an N-acetylmethionine. A membrane-binding amphipathic helix region spans residues methionine 1–phenylalanine 27. Position 10 is a phosphoserine (serine 10). The BAR domain occupies glutamate 24–proline 287. Positions serine 205–valine 234 form a coiled coil. Residues serine 340–serine 400 enclose the SH3 domain. Serine 400 carries the phosphoserine modification.

The protein belongs to the endophilin family. Homodimer, and heterodimer with SH3GLB1.

The protein localises to the cytoplasm. The protein is Endophilin-B2 (Sh3glb2) of Mus musculus (Mouse).